The following is a 400-amino-acid chain: Serine/threonine-protein kinase AFC3 (400 aa).

The tract at residues 1-29 (MIANGFESMDKERVRKRPRMTWDEAPAEP) is disordered. Residues 71–396 (YKILSKMGEG…ANEALDHPFF (326 aa)) form the Protein kinase domain. Residues 77 to 85 (MGEGTFGRV) and Lys100 each bind ATP. Asp196 acts as the Proton acceptor in catalysis.

The protein belongs to the protein kinase superfamily. CMGC Ser/Thr protein kinase family. Lammer subfamily.

The enzyme catalyses L-seryl-[protein] + ATP = O-phospho-L-seryl-[protein] + ADP + H(+). It carries out the reaction L-threonyl-[protein] + ATP = O-phospho-L-threonyl-[protein] + ADP + H(+). It catalyses the reaction L-tyrosyl-[protein] + ATP = O-phospho-L-tyrosyl-[protein] + ADP + H(+). The protein is Serine/threonine-protein kinase AFC3 (AFC3) of Arabidopsis thaliana (Mouse-ear cress).